The chain runs to 60 residues: Translational regulator CsrA (60 aa).

Belongs to the CsrA/RsmA family. In terms of assembly, homodimer; the beta-strands of each monomer intercalate to form a hydrophobic core, while the alpha-helices form wings that extend away from the core.

Its subcellular location is the cytoplasm. Its function is as follows. A key translational regulator that binds mRNA to regulate translation initiation and/or mRNA stability. Mediates global changes in gene expression, shifting from rapid growth to stress survival by linking envelope stress, the stringent response and the catabolite repression systems. Usually binds in the 5'-UTR; binding at or near the Shine-Dalgarno sequence prevents ribosome-binding, repressing translation, binding elsewhere in the 5'-UTR can activate translation and/or stabilize the mRNA. Its function is antagonized by small RNA(s). In Histophilus somni (strain 2336) (Haemophilus somnus), this protein is Translational regulator CsrA.